A 552-amino-acid polypeptide reads, in one-letter code: N-acetylglucosamine-6-sulfatase (552 aa).

A signal peptide spans 1–36 (MRLLPLAPGRLRRGSPRHLPSCSPALLLLVLGGCLG). Ca(2+) is bound by residues aspartate 55, aspartate 56, and cysteine 91. Cysteine 91 acts as the Nucleophile in catalysis. Cysteine 91 is subject to 3-oxoalanine (Cys). N-linked (GlcNAc...) asparagine glycans are attached at residues asparagine 111, asparagine 117, asparagine 183, asparagine 198, asparagine 210, asparagine 279, and asparagine 317. Ca(2+) is bound by residues aspartate 326 and asparagine 327. Residues asparagine 362, asparagine 387, asparagine 405, asparagine 422, asparagine 449, and asparagine 480 are each glycosylated (N-linked (GlcNAc...) asparagine). Position 541 is a phosphoserine (serine 541).

The protein belongs to the sulfatase family. Ca(2+) serves as cofactor. Post-translationally, the form A (78 kDa) is processed by internal peptidase cleavage to a 32 kDa N-terminal species (form B) and a 48 kDa C-terminal species. The conversion to 3-oxoalanine (also known as C-formylglycine, FGly), of a serine or cysteine residue in prokaryotes and of a cysteine residue in eukaryotes, is critical for catalytic activity.

Its subcellular location is the lysosome. It catalyses the reaction Hydrolysis of the 6-sulfate groups of the N-acetyl-D-glucosamine 6-sulfate units of heparan sulfate and keratan sulfate.. Hydrolyzes 6-sulfate groups in N-acetyl-d-glucosaminide units of heparin sulfate and keratan sulfate. In Homo sapiens (Human), this protein is N-acetylglucosamine-6-sulfatase (GNS).